The primary structure comprises 318 residues: Homoserine kinase (318 aa).

97–107 (PIGSGLGSSAC) is a binding site for ATP.

It belongs to the GHMP kinase family. Homoserine kinase subfamily.

Its subcellular location is the cytoplasm. It carries out the reaction L-homoserine + ATP = O-phospho-L-homoserine + ADP + H(+). It participates in amino-acid biosynthesis; L-threonine biosynthesis; L-threonine from L-aspartate: step 4/5. Functionally, catalyzes the ATP-dependent phosphorylation of L-homoserine to L-homoserine phosphate. This Aliivibrio fischeri (strain MJ11) (Vibrio fischeri) protein is Homoserine kinase.